The primary structure comprises 415 residues: L-cysteine:1D-myo-inositol 2-amino-2-deoxy-alpha-D-glucopyranoside ligase (415 aa).

Cys47 contributes to the Zn(2+) binding site. L-cysteinyl-5'-AMP is bound by residues 47 to 50, Thr62, and 85 to 87; these read CGIT and NVT. The 'HIGH' region signature appears at 49-59; that stretch reads ITPYDATHLGH. Positions 190 to 195 match the 'ERGGDP' region motif; sequence ERGGDP. Residue Trp230 coordinates L-cysteinyl-5'-AMP. Cys234 contacts Zn(2+). An L-cysteinyl-5'-AMP-binding site is contributed by 252–254; sequence GSD. Position 259 (His259) interacts with Zn(2+). Ile286 is an L-cysteinyl-5'-AMP binding site. A 'KMSKS' region motif is present at residues 292 to 296; it reads KMSKS.

This sequence belongs to the class-I aminoacyl-tRNA synthetase family. MshC subfamily. In terms of assembly, monomer. The cofactor is Zn(2+).

It carries out the reaction 1D-myo-inositol 2-amino-2-deoxy-alpha-D-glucopyranoside + L-cysteine + ATP = 1D-myo-inositol 2-(L-cysteinylamino)-2-deoxy-alpha-D-glucopyranoside + AMP + diphosphate + H(+). In terms of biological role, catalyzes the ATP-dependent condensation of GlcN-Ins and L-cysteine to form L-Cys-GlcN-Ins. In Mycolicibacterium paratuberculosis (strain ATCC BAA-968 / K-10) (Mycobacterium paratuberculosis), this protein is L-cysteine:1D-myo-inositol 2-amino-2-deoxy-alpha-D-glucopyranoside ligase (mshC).